Consider the following 671-residue polypeptide: Copper amine oxidase 1 (671 aa).

The tract at residues 3 to 106 is N2; that stretch reads PHPLAILSEE…QHRVVGKEHH (104 aa). Residues 107-211 form an N3 region; the sequence is ASLTLSEFDT…DRPATGGKGE (105 aa). 319–330 provides a ligand contact to substrate; sequence AFDFGDGGGGNM. Residue Asp321 is the Proton acceptor of the active site. Cys340 and Cys366 are joined by a disulfide. 402–407 contacts substrate; it reads LANYEY. Tyr405 serves as the catalytic Schiff-base intermediate with substrate; via topaquinone. A 2',4',5'-topaquinone modification is found at Tyr405. The Cu cation site is built by His455 and His457. Asp464 contacts Mn(2+). N-linked (GlcNAc...) asparagine glycosylation is present at Asn471. Asp606 is a Mn(2+) binding site. Cu cation is bound at residue His617.

This sequence belongs to the copper/topaquinone oxidase family. As to quaternary structure, homodimer. The cofactor is Cu cation. Zn(2+) is required as a cofactor. L-topaquinone serves as cofactor. Requires Mn(2+) as cofactor. In terms of processing, topaquinone (TPQ) is generated by copper-dependent autoxidation of a specific tyrosyl residue.

The catalysed reaction is histamine + O2 + H2O = imidazole-4-acetaldehyde + H2O2 + NH4(+). This Aspergillus niger protein is Copper amine oxidase 1 (AO-I).